We begin with the raw amino-acid sequence, 107 residues long: Monogrin 2 (107 aa).

An N-terminal signal peptide occupies residues 1-20; it reads MEGKVLLCFALLLPFTVAQA. 3 disulfide bridges follow: Cys28/Cys82, Cys36/Cys62, and Cys55/Cys78. Residues 29–82 enclose the BPTI/Kunitz inhibitor domain; that stretch reads GYLMMQRCRGDTTETKAWGFNYEEKKCQKETVICGTGGAPRNAFETKKDCDALC. Positions 37–39 match the Cell attachment site motif; sequence RGD.

In terms of processing, the N-terminus is blocked. In terms of tissue distribution, expressed in salivary glands.

It is found in the cytoplasmic vesicle. Its subcellular location is the secretory vesicle. The protein localises to the secreted. Tick salivary platelet aggregation inhibitor that plays an important part in the anti-hemostatic strategy of ticks. Inhibits platelet aggregation induced by ADP (IC(50)~150 nM), collagen, and platelet activating factor (PAF). Acts by binding to platelet membrane glycoprotein IIb-IIIa (ITGA2B/ITGB3) in a metal ion dependent manner. Does not inhibit aggregation induced by ristocecin, an agonist that aggregates platelets independently from the glycoprotein IIb-IIIa (ITGA2B/ITGB3). In contrast to other tick platelet aggregation inhibitors, this protein does not protect ITGA2B/ITGB3 from dissociation under SDS condition, suggesting it may dissocate much faster than its orthologs. This is Monogrin 2 from Argas monolakensis (Mono lake bird tick).